The primary structure comprises 323 residues: Acetyl-coenzyme A carboxylase carboxyl transferase subunit alpha (323 aa).

Positions 40–293 (LAEKSLQLTK…RKALAESLKT (254 aa)) constitute a CoA carboxyltransferase C-terminal domain.

The protein belongs to the AccA family. As to quaternary structure, acetyl-CoA carboxylase is a heterohexamer composed of biotin carboxyl carrier protein (AccB), biotin carboxylase (AccC) and two subunits each of ACCase subunit alpha (AccA) and ACCase subunit beta (AccD).

The protein localises to the cytoplasm. It catalyses the reaction N(6)-carboxybiotinyl-L-lysyl-[protein] + acetyl-CoA = N(6)-biotinyl-L-lysyl-[protein] + malonyl-CoA. It functions in the pathway lipid metabolism; malonyl-CoA biosynthesis; malonyl-CoA from acetyl-CoA: step 1/1. Functionally, component of the acetyl coenzyme A carboxylase (ACC) complex. First, biotin carboxylase catalyzes the carboxylation of biotin on its carrier protein (BCCP) and then the CO(2) group is transferred by the carboxyltransferase to acetyl-CoA to form malonyl-CoA. This is Acetyl-coenzyme A carboxylase carboxyl transferase subunit alpha from Polynucleobacter necessarius subsp. necessarius (strain STIR1).